A 375-amino-acid polypeptide reads, in one-letter code: tRNA-specific 2-thiouridylase MnmA (375 aa).

Residues 7–14 (GLSGGVDS) and Met-33 contribute to the ATP site. An interaction with target base in tRNA region spans residues 102 to 104 (NPD). Cys-107 functions as the Nucleophile in the catalytic mechanism. Cysteines 107 and 205 form a disulfide. Gly-132 provides a ligand contact to ATP. Positions 155–157 (KDQ) are interaction with tRNA. Catalysis depends on Cys-205, which acts as the Cysteine persulfide intermediate. Residues 313–314 (RY) form an interaction with tRNA region.

This sequence belongs to the MnmA/TRMU family.

It localises to the cytoplasm. It catalyses the reaction S-sulfanyl-L-cysteinyl-[protein] + uridine(34) in tRNA + AH2 + ATP = 2-thiouridine(34) in tRNA + L-cysteinyl-[protein] + A + AMP + diphosphate + H(+). Catalyzes the 2-thiolation of uridine at the wobble position (U34) of tRNA, leading to the formation of s(2)U34. The polypeptide is tRNA-specific 2-thiouridylase MnmA (Phytoplasma australiense).